A 1081-amino-acid chain; its full sequence is Mediator of RNA polymerase II transcription subunit 15 (1081 aa).

At S2 the chain carries N-acetylserine. Residues 25–49 (LQVLMDINTLNGGSSDTADKIRIHA) form an interaction with GCN4 region. The interval 238-286 (QAQAQANNNNNGLPQNGNINNNINIPQQQQMQPPNSSANNNPLQQQSSQ) is disordered. A Phosphoserine modification is found at S335. 11 tandem repeats follow at residues 422–423 (QA), 424–425 (QA), 426–427 (QA), 428–429 (QA), 430–431 (QA), 432–433 (QA), 434–435 (QA), 436–437 (QA), 438–439 (QA), 440–441 (QA), and 442–443 (QA). A 30 X 2 AA approximate tandem repeats of Q-A region spans residues 422-481 (QAQAQAQAQAQAQAQAQAQAQAAQAAQAQAQAQAQAQAQAQAQAQAQAQAQAQAQAQAQA). The 12; approximate repeat unit spans residues 444-445 (AQ). The 13; approximate repeat unit spans residues 446-447 (AA). A run of 17 repeats spans residues 448–449 (QA), 450–451 (QA), 452–453 (QA), 454–455 (QA), 456–457 (QA), 458–459 (QA), 460–461 (QA), 462–463 (QA), 464–465 (QA), 466–467 (QA), 468–469 (QA), 470–471 (QA), 472–473 (QA), 474–475 (QA), 476–477 (QA), 478–479 (QA), and 480–481 (QA). The span at 476-497 (QAQAQAHAQHQPSQQPQQAQQQ) shows a compositional bias: low complexity. 2 disordered regions span residues 476–505 (QAQA…HGLT) and 692–712 (QQQQ…YSAM). S736, S752, S783, S785, and S789 each carry phosphoserine. Positions 744–836 (PVSAAATPSL…KTVQSPMGAQ (93 aa)) are disordered. Positions 749–836 (ATPSLNKTIN…KTVQSPMGAQ (88 aa)) are enriched in polar residues. T793 is modified (phosphothreonine). S831, S1003, S1008, S1018, and S1034 each carry phosphoserine. The interval 1026–1055 (DSKKIKVDSPDDPFMTKSGATTSEKQEVTN) is disordered.

Belongs to the Mediator complex subunit 15 family. In terms of assembly, component of the Mediator complex, which is composed of at least 21 subunits that form three structurally distinct submodules. The Mediator head module contains MED6, MED8, MED11, SRB4/MED17, SRB5/MED18, ROX3/MED19, SRB2/MED20 and SRB6/MED22, the middle module contains MED1, MED4, NUT1/MED5, MED7, CSE2/MED9, NUT2/MED10, SRB7/MED21 and SOH1/MED31, and the tail module contains MED2, PGD1/MED3, RGR1/MED14, GAL11/MED15 and SIN4/MED16. The head and the middle modules interact directly with RNA polymerase II, whereas the elongated tail module interacts with gene-specific regulatory proteins. GAL11/MED15 interacts with the activator GAL4; the interaction is direct. GAL11/MED15 interacts (via multiple regions) with the activator GCN4; the interaction is direct.

The protein resides in the nucleus. Component of the Mediator complex, a coactivator involved in the regulated transcription of nearly all RNA polymerase II-dependent genes. Mediator functions as a bridge to convey information from gene-specific regulatory proteins to the basal RNA polymerase II transcription machinery. The Mediator complex, having a compact conformation in its free form, is recruited to promoters by direct interactions with regulatory proteins and serves for the assembly of a functional pre-initiation complex with RNA polymerase II and the general transcription factors. The Mediator complex unfolds to an extended conformation and partially surrounds RNA polymerase II, specifically interacting with the unphosphorylated form of the C-terminal domain (CTD) of RNA polymerase II. The Mediator complex dissociates from the RNA polymerase II holoenzyme and stays at the promoter when transcriptional elongation begins. It has an important role in the negative regulation of Ty transcription. The sequence is that of Mediator of RNA polymerase II transcription subunit 15 from Saccharomyces cerevisiae (strain ATCC 204508 / S288c) (Baker's yeast).